Reading from the N-terminus, the 669-residue chain is DNA ligase (669 aa).

NAD(+)-binding positions include 32-36, 81-82, and Glu-111; these read DAEYD and SL. Lys-113 acts as the N6-AMP-lysine intermediate in catalysis. Positions 134, 171, 290, and 314 each coordinate NAD(+). Positions 408, 411, 426, and 432 each coordinate Zn(2+). In terms of domain architecture, BRCT spans 591–669; sequence EEALSLKGQT…EAELLAILGS (79 aa).

The protein belongs to the NAD-dependent DNA ligase family. LigA subfamily. It depends on Mg(2+) as a cofactor. Requires Mn(2+) as cofactor.

The enzyme catalyses NAD(+) + (deoxyribonucleotide)n-3'-hydroxyl + 5'-phospho-(deoxyribonucleotide)m = (deoxyribonucleotide)n+m + AMP + beta-nicotinamide D-nucleotide.. DNA ligase that catalyzes the formation of phosphodiester linkages between 5'-phosphoryl and 3'-hydroxyl groups in double-stranded DNA using NAD as a coenzyme and as the energy source for the reaction. It is essential for DNA replication and repair of damaged DNA. In Shewanella loihica (strain ATCC BAA-1088 / PV-4), this protein is DNA ligase.